The primary structure comprises 622 residues: Low affinity potassium transport system protein Kup (622 aa).

A run of 12 helical transmembrane segments spans residues 9–29 (LPAI…TSPL), 49–69 (VFGF…IKYL), 103–123 (VIMG…TPAI), 137–157 (PQLD…LFMI), 165–185 (VGKL…VLGL), 213–233 (VSFI…ALYA), 247–267 (WFTV…ALLL), 276–296 (PFFL…AALA), 337–357 (IYIP…IVSF), 363–383 (LAAA…ILST), 396–416 (FVAL…SANL), and 419–439 (LLSG…IMTT).

The protein belongs to the HAK/KUP transporter (TC 2.A.72) family.

The protein localises to the cell inner membrane. The catalysed reaction is K(+)(in) + H(+)(in) = K(+)(out) + H(+)(out). Responsible for the low-affinity transport of potassium into the cell. Likely operates as a K(+):H(+) symporter. This is Low affinity potassium transport system protein Kup from Salmonella paratyphi B (strain ATCC BAA-1250 / SPB7).